The following is a 229-amino-acid chain: MSLLAQLDQKIAANGGLIVSCQPVPDSPLDKPEIVAAMALAAEQAGAVAIRIEGVANLQATRAVVSVPIIGIVKRDLEDSPVRITAYIEDVDALAQAGADIIAIDGTDRPRPVPVETLLARIHHHGLLAMTDCSTPEDGLACQKLGAEIIGTTLSGYTTPETPEEPDLALVKTLSEAGCRVIAEGRYNTPAQAADAMRHGAWAVTVGSAITRLEHICQWYNTAMKKAVL.

This sequence belongs to the NanE family.

The catalysed reaction is an N-acyl-D-glucosamine 6-phosphate = an N-acyl-D-mannosamine 6-phosphate. Its pathway is amino-sugar metabolism; N-acetylneuraminate degradation; D-fructose 6-phosphate from N-acetylneuraminate: step 3/5. In terms of biological role, converts N-acetylmannosamine-6-phosphate (ManNAc-6-P) to N-acetylglucosamine-6-phosphate (GlcNAc-6-P). The sequence is that of Putative N-acetylmannosamine-6-phosphate 2-epimerase from Shigella flexneri serotype 5b (strain 8401).